The primary structure comprises 277 residues: MKQYLELMRHVRDNGVRKEDRTGTGTVSVFGYQMRFDLSQGFPLVTTKKCHLKSIIHELLWFLNGETNIAYLNNNGVKIWDAWATESGDLGPIYGAQWRSWPAQNGETLDQISQLIEQIKHKPDSRRLIISAWNPALLPDESISPQDNVRNGKMALPPCHTLFQFYVLEGRLSCQLYQRSADIFLGVPFNIASYALLTMMIAQVTGLAPGDFVHTFGDAHLYLNHLEQVDTQLQRQPLPLPTMAINPAVKDIFGFCFDDFELQNYQAHPHIAAPISV.

A dUMP-binding site is contributed by R21. H51 serves as a coordination point for (6R)-5,10-methylene-5,6,7,8-tetrahydrofolate. 126 to 127 is a binding site for dUMP; it reads RR. Residue C159 is the Nucleophile of the active site. Residues 179 to 182, N190, and 220 to 222 each bind dUMP; these read RSAD and HLY. D182 provides a ligand contact to (6R)-5,10-methylene-5,6,7,8-tetrahydrofolate. Residue S276 coordinates (6R)-5,10-methylene-5,6,7,8-tetrahydrofolate.

This sequence belongs to the thymidylate synthase family. Bacterial-type ThyA subfamily. Homodimer.

The protein localises to the cytoplasm. It carries out the reaction dUMP + (6R)-5,10-methylene-5,6,7,8-tetrahydrofolate = 7,8-dihydrofolate + dTMP. It participates in pyrimidine metabolism; dTTP biosynthesis. Catalyzes the reductive methylation of 2'-deoxyuridine-5'-monophosphate (dUMP) to 2'-deoxythymidine-5'-monophosphate (dTMP) while utilizing 5,10-methylenetetrahydrofolate (mTHF) as the methyl donor and reductant in the reaction, yielding dihydrofolate (DHF) as a by-product. This enzymatic reaction provides an intracellular de novo source of dTMP, an essential precursor for DNA biosynthesis. This chain is Thymidylate synthase, found in Teredinibacter turnerae (strain ATCC 39867 / T7901).